The following is a 90-amino-acid chain: Protein RALF-like 3 (90 aa).

The N-terminal stretch at 1-29 is a signal peptide; sequence MSNLRGTNRFILVAVLVSFVFLSIMNAEA. 2 disulfide bridges follow: C59–C67 and C80–C86.

Belongs to the plant rapid alkalinization factor (RALF) family.

It is found in the secreted. In terms of biological role, cell signaling peptide that may regulate plant stress, growth, and development. Mediates a rapid alkalinization of extracellular space by mediating a transient increase in the cytoplasmic Ca(2+) concentration leading to a calcium-dependent signaling events through a cell surface receptor and a concomitant activation of some intracellular mitogen-activated protein kinases. The sequence is that of Protein RALF-like 3 (RALFL3) from Arabidopsis thaliana (Mouse-ear cress).